A 265-amino-acid polypeptide reads, in one-letter code: Thiazole synthase (265 aa).

The active-site Schiff-base intermediate with DXP is K107. Residues G168, A194–G195, and N216–T217 contribute to the 1-deoxy-D-xylulose 5-phosphate site.

The protein belongs to the ThiG family. Homotetramer. Forms heterodimers with either ThiH or ThiS.

The protein resides in the cytoplasm. It catalyses the reaction [ThiS sulfur-carrier protein]-C-terminal-Gly-aminoethanethioate + 2-iminoacetate + 1-deoxy-D-xylulose 5-phosphate = [ThiS sulfur-carrier protein]-C-terminal Gly-Gly + 2-[(2R,5Z)-2-carboxy-4-methylthiazol-5(2H)-ylidene]ethyl phosphate + 2 H2O + H(+). Its pathway is cofactor biosynthesis; thiamine diphosphate biosynthesis. Functionally, catalyzes the rearrangement of 1-deoxy-D-xylulose 5-phosphate (DXP) to produce the thiazole phosphate moiety of thiamine. Sulfur is provided by the thiocarboxylate moiety of the carrier protein ThiS. In vitro, sulfur can be provided by H(2)S. The chain is Thiazole synthase from Pseudomonas paraeruginosa (strain DSM 24068 / PA7) (Pseudomonas aeruginosa (strain PA7)).